The sequence spans 430 residues: Phosphomethylpyrimidine synthase (430 aa).

Substrate contacts are provided by residues Asn67, Met96, Tyr125, His161, 183 to 185 (SRG), 224 to 227 (DALR), and Glu263. Position 267 (His267) interacts with Zn(2+). A substrate-binding site is contributed by Tyr290. His331 contacts Zn(2+). [4Fe-4S] cluster contacts are provided by Cys406, Cys409, and Cys413.

It belongs to the ThiC family. In terms of assembly, homodimer. Requires [4Fe-4S] cluster as cofactor.

The catalysed reaction is 5-amino-1-(5-phospho-beta-D-ribosyl)imidazole + S-adenosyl-L-methionine = 4-amino-2-methyl-5-(phosphooxymethyl)pyrimidine + CO + 5'-deoxyadenosine + formate + L-methionine + 3 H(+). It functions in the pathway cofactor biosynthesis; thiamine diphosphate biosynthesis. Catalyzes the synthesis of the hydroxymethylpyrimidine phosphate (HMP-P) moiety of thiamine from aminoimidazole ribotide (AIR) in a radical S-adenosyl-L-methionine (SAM)-dependent reaction. This chain is Phosphomethylpyrimidine synthase, found in Campylobacter jejuni subsp. jejuni serotype O:6 (strain 81116 / NCTC 11828).